The primary structure comprises 99 residues: Essential MCU regulator, mitochondrial (99 aa).

The N-terminal 39 residues, 1–39 (MAARVGVLSVAGFRAAARAGGLLRASKQSSAVSHVPCRT), are a transit peptide targeting the mitochondrion. Topologically, residues 40 to 57 (AIATSAGTVLPKPEKVSF) are mitochondrial matrix. The helical transmembrane segment at 58-77 (GLLRVFTVVIPFLYIGTLIS) threads the bilayer. Over 78 to 99 (KNFAALLEEHDIFVPEDDDDDD) the chain is Mitochondrial intermembrane.

Belongs to the SMDT1/EMRE family. As to quaternary structure, component of the uniplex complex.

It is found in the mitochondrion inner membrane. Essential regulatory subunit of the mitochondrial calcium uniporter complex (uniplex), a complex that mediates calcium uptake into mitochondria. Required to bridge the calcium-sensing proteins micu1 with the calcium-conducting subunit mcu. Acts by mediating activation of mcu and retention of micu1 to the mcu pore, in order to ensure tight regulation of the uniplex complex and appropriate responses to intracellular calcium signaling. This is Essential MCU regulator, mitochondrial from Xenopus tropicalis (Western clawed frog).